A 637-amino-acid chain; its full sequence is Chaperone protein HtpG (637 aa).

Residues 1–347 form an a; substrate-binding region; it reads MTQSVHAETH…SNDLPLNVSR (347 aa). The segment at 348 to 564 is b; it reads EILQDNKVTV…NHGMSTQMIK (217 aa). A c region spans residues 565–637; the sequence is LMRAAGQPVP…SRINRLLLQA (73 aa).

Belongs to the heat shock protein 90 family. In terms of assembly, homodimer.

The protein localises to the cytoplasm. In terms of biological role, molecular chaperone. Has ATPase activity. This Aeromonas salmonicida (strain A449) protein is Chaperone protein HtpG.